A 348-amino-acid chain; its full sequence is Putative 4-hydroxythreonine-4-phosphate dehydrogenase 2 (348 aa).

A divalent metal cation-binding residues include histidine 180, histidine 224, and histidine 279.

It belongs to the PdxA family. Homodimer. The cofactor is Zn(2+). Mg(2+) is required as a cofactor. Requires Co(2+) as cofactor.

It localises to the cytoplasm. The enzyme catalyses 4-(phosphooxy)-L-threonine + NAD(+) = 3-amino-2-oxopropyl phosphate + CO2 + NADH. The protein operates within cofactor biosynthesis; pyridoxine 5'-phosphate biosynthesis; pyridoxine 5'-phosphate from D-erythrose 4-phosphate: step 4/5. Catalyzes the NAD(P)-dependent oxidation of 4-(phosphooxy)-L-threonine (HTP) into 2-amino-3-oxo-4-(phosphooxy)butyric acid which spontaneously decarboxylates to form 3-amino-2-oxopropyl phosphate (AHAP). This Rhizobium meliloti (strain 1021) (Ensifer meliloti) protein is Putative 4-hydroxythreonine-4-phosphate dehydrogenase 2.